We begin with the raw amino-acid sequence, 267 residues long: Phosphate import ATP-binding protein PstB (267 aa).

Positions 21 to 262 (VAARNLDFYY…PSKQQTEDYI (242 aa)) constitute an ABC transporter domain. 53–60 (GPSGCGKS) contributes to the ATP binding site.

Belongs to the ABC transporter superfamily. Phosphate importer (TC 3.A.1.7) family. In terms of assembly, the complex is composed of two ATP-binding proteins (PstB), two transmembrane proteins (PstC and PstA) and a solute-binding protein (PstS).

The protein resides in the cell inner membrane. It catalyses the reaction phosphate(out) + ATP + H2O = ADP + 2 phosphate(in) + H(+). Its function is as follows. Part of the ABC transporter complex PstSACB involved in phosphate import. Responsible for energy coupling to the transport system. In Xanthomonas euvesicatoria pv. vesicatoria (strain 85-10) (Xanthomonas campestris pv. vesicatoria), this protein is Phosphate import ATP-binding protein PstB.